We begin with the raw amino-acid sequence, 189 residues long: Small ribosomal subunit protein uS5 (189 aa).

The 64-residue stretch at 22-85 (LIDKLVTINR…ERAKRGMIRV (64 aa)) folds into the S5 DRBM domain. The interval 164 to 189 (SVASRRGKKVADLFGPKREKEAPADV) is disordered. Positions 172–189 (KVADLFGPKREKEAPADV) are enriched in basic and acidic residues.

The protein belongs to the universal ribosomal protein uS5 family. Part of the 30S ribosomal subunit. Contacts proteins S4 and S8.

In terms of biological role, with S4 and S12 plays an important role in translational accuracy. Functionally, located at the back of the 30S subunit body where it stabilizes the conformation of the head with respect to the body. This chain is Small ribosomal subunit protein uS5, found in Acidiphilium cryptum (strain JF-5).